Consider the following 272-residue polypeptide: Homeobox protein SIX3 (272 aa).

Positions 169 to 228 (GEQKTHCFKERTRGLLREWYLQDPYPNPGKKRELAHATGLTPTQVGNWFKNRRQRDRAAA) form a DNA-binding region, homeobox. The disordered stretch occupies residues 244–272 (CTLSGGDSSERADGDTFLSVTDSDSDLDV).

It belongs to the SIX/Sine oculis homeobox family. In terms of assembly, interacts with GMNN.

The protein resides in the nucleus. Its function is as follows. Transcriptional regulator which can act as both a transcriptional repressor and activator by binding a ATTA homeodomain core recognition sequence on these target genes. During forebrain development represses WNT1 expression allowing zona limitans intrathalamica formation and thereby ensuring proper anterio-posterior patterning of the diencephalon and formation of the rostral diencephalon. Acts as a direct upstream activator of SHH expression in the rostral diencephalon ventral midline and that in turn SHH maintains its expression. In addition, Six3 activity is required for the formation of the telencephalon. During postnatal stages of brain development is necessary for ependymal cell maturation by promoting the maturation of radial glia into ependymal cells through regulation of neuroblast proliferation and migration. Acts on the proliferation and differentiation of neural progenitor cells through activating transcription of CCND1 and CCND2. During early lens formation plays a role in lens induction and specification by activating directly PAX6 in the presumptive lens ectoderm. In turn PAX6 activates SIX3 resulting in activation of PDGFRA and CCND1 promoting cell proliferation. Also is required for the neuroretina development by directly suppressing WNT8B expression in the anterior neural plate territory. Its action during retina development and lens morphogenesis is AES and TLE4-dependent manner. Furthermore, during eye development regulates several genes expression. Before and during early lens development represses the CRYGF promoter by binding a SIX repressor element. Directly activates RHO transcription, or cooperates with CRX or NRL. Six3 also functions in the formation of the proximodistal axis of the optic cup, and promotes the formation of optic vesicles-like structures. During pituitary development, acts in parallel or alternatively with HESX1 to control cell proliferation through Wnt/beta-catenin pathway. Plays a role in eye development by suppressing WNT1 expression and in dorsal-ventral patterning by repressing BMP signaling pathway. In Oryzias latipes (Japanese rice fish), this protein is Homeobox protein SIX3 (six3).